Here is a 264-residue protein sequence, read N- to C-terminus: Small ribosomal subunit protein uS2 (264 aa).

It belongs to the universal ribosomal protein uS2 family.

The protein is Small ribosomal subunit protein uS2 of Helicobacter pylori (strain Shi470).